The sequence spans 93 residues: Small ribosomal subunit protein uS19 (93 aa).

This sequence belongs to the universal ribosomal protein uS19 family.

Its function is as follows. Protein S19 forms a complex with S13 that binds strongly to the 16S ribosomal RNA. This is Small ribosomal subunit protein uS19 from Geobacter sulfurreducens (strain ATCC 51573 / DSM 12127 / PCA).